The primary structure comprises 157 residues: Ribosomal RNA large subunit methyltransferase H (157 aa).

S-adenosyl-L-methionine-binding positions include L73, G105, and 124 to 129 (MSKMTF).

It belongs to the RNA methyltransferase RlmH family. Homodimer.

The protein localises to the cytoplasm. It carries out the reaction pseudouridine(1915) in 23S rRNA + S-adenosyl-L-methionine = N(3)-methylpseudouridine(1915) in 23S rRNA + S-adenosyl-L-homocysteine + H(+). Specifically methylates the pseudouridine at position 1915 (m3Psi1915) in 23S rRNA. The polypeptide is Ribosomal RNA large subunit methyltransferase H (Bacteroides fragilis (strain ATCC 25285 / DSM 2151 / CCUG 4856 / JCM 11019 / LMG 10263 / NCTC 9343 / Onslow / VPI 2553 / EN-2)).